Here is a 489-residue protein sequence, read N- to C-terminus: Cysteine--tRNA ligase (489 aa).

Cysteine 27 contributes to the Zn(2+) binding site. The 'HIGH' region signature appears at 29-39 (VTVYDLCHLGH). Zn(2+) contacts are provided by cysteine 211, histidine 236, and glutamate 240. The 'KMSKS' region signature appears at 268-272 (KMSKS). Residue lysine 271 coordinates ATP.

The protein belongs to the class-I aminoacyl-tRNA synthetase family. Monomer. It depends on Zn(2+) as a cofactor.

The protein localises to the cytoplasm. It catalyses the reaction tRNA(Cys) + L-cysteine + ATP = L-cysteinyl-tRNA(Cys) + AMP + diphosphate. The protein is Cysteine--tRNA ligase of Prochlorococcus marinus (strain MIT 9312).